We begin with the raw amino-acid sequence, 487 residues long: Serine/threonine-protein kinase BSK8 (487 aa).

Gly2 carries the N-myristoyl glycine lipid modification. Ser20 bears the Phosphoserine mark. One can recognise a Protein kinase domain in the interval 59-325; sequence ENIVSEHGER…DLEIASHQLL (267 aa). Residues 65–73, Asn71, Lys87, and 133–135 each bind ATP; these read HGERAPNVV and EFM. Asp181 acts as the Proton acceptor in catalysis. Residues 185–186 and Asn205 each bind ATP; that span reads YR. Ser213 bears the Phosphoserine mark.

Belongs to the protein kinase superfamily. Ser/Thr protein kinase family. As to quaternary structure, interacts with ASK7/BIN2, BSK1, BSK5, BSK6 and BSK11. Interacts with BSL2. Phosphorylated by BRI1, ASK7/BIN2 and ASK9/BIL2.

The protein localises to the cell membrane. The catalysed reaction is L-seryl-[protein] + ATP = O-phospho-L-seryl-[protein] + ADP + H(+). It carries out the reaction L-threonyl-[protein] + ATP = O-phospho-L-threonyl-[protein] + ADP + H(+). Functionally, probable serine/threonine kinase that acts as a positive regulator of brassinosteroid (BR) signaling downstream of the receptor kinase BRI1. Functions redundantly with BSK3, BSK4, BSK6 and BSK7. Involved in the regulation of sucrose-phosphate synthase 1 (SPS1) in the context of sucrose resuply after starvation. Activates BSL2, a phosphatase that may dephosphorylate SPS1, leading to the activation of SPS1. In Arabidopsis thaliana (Mouse-ear cress), this protein is Serine/threonine-protein kinase BSK8.